The sequence spans 122 residues: Large ribosomal subunit protein uL14 (122 aa).

Belongs to the universal ribosomal protein uL14 family. In terms of assembly, part of the 50S ribosomal subunit. Forms a cluster with proteins L3 and L19. In the 70S ribosome, L14 and L19 interact and together make contacts with the 16S rRNA in bridges B5 and B8.

Functionally, binds to 23S rRNA. Forms part of two intersubunit bridges in the 70S ribosome. This chain is Large ribosomal subunit protein uL14, found in Dechloromonas aromatica (strain RCB).